We begin with the raw amino-acid sequence, 937 residues long: Beta-mannosidase A (937 aa).

The signal sequence occupies residues 1 to 23 (MRALPTTATTLLGVLFFPSASRS). 7 N-linked (GlcNAc...) asparagine glycosylation sites follow: N42, N82, N250, N285, N319, N329, and N350. Catalysis depends on E482, which acts as the Proton donor. Residues N553, N612, N743, and N796 are each glycosylated (N-linked (GlcNAc...) asparagine).

This sequence belongs to the glycosyl hydrolase 2 family. Beta-mannosidase A subfamily. In terms of assembly, homodimer. Post-translationally, N-glycosylated.

The protein resides in the secreted. The enzyme catalyses Hydrolysis of terminal, non-reducing beta-D-mannose residues in beta-D-mannosides.. Its pathway is glycan metabolism; N-glycan degradation. In terms of biological role, exoglycosidase that cleaves the single beta-linked mannose residue from the non-reducing end of beta-mannosidic oligosaccharides of various complexity and length. Involved in the degradation of polymeric mannan and galactomannan. Releases the terminal mannose residue from mannotriose and is somewaht less active on other mannooligosaccharides. In Aspergillus aculeatus, this protein is Beta-mannosidase A (mndA).